The primary structure comprises 216 residues: 3-isopropylmalate dehydratase small subunit (216 aa).

This sequence belongs to the LeuD family. LeuD type 1 subfamily. As to quaternary structure, heterodimer of LeuC and LeuD.

The enzyme catalyses (2R,3S)-3-isopropylmalate = (2S)-2-isopropylmalate. Its pathway is amino-acid biosynthesis; L-leucine biosynthesis; L-leucine from 3-methyl-2-oxobutanoate: step 2/4. Catalyzes the isomerization between 2-isopropylmalate and 3-isopropylmalate, via the formation of 2-isopropylmaleate. The protein is 3-isopropylmalate dehydratase small subunit of Albidiferax ferrireducens (strain ATCC BAA-621 / DSM 15236 / T118) (Rhodoferax ferrireducens).